Consider the following 380-residue polypeptide: Flap endonuclease 1 (380 aa).

The tract at residues 1–104 (MGIQGLAKLI…GELAKRSERR (104 aa)) is N-domain. Arginine 19 bears the Symmetric dimethylarginine; by PRMT5 mark. Aspartate 34 contributes to the Mg(2+) binding site. DNA-binding residues include arginine 47 and arginine 70. Lysine 80 is modified (N6-acetyllysine). Aspartate 86 is a Mg(2+) binding site. Symmetric dimethylarginine; by PRMT5 is present on residues arginine 100 and arginine 104. The I-domain stretch occupies residues 122–253 (EVEKFTKRLV…KRAVDLIQKH (132 aa)). Residues glutamate 158, glutamate 160, aspartate 179, and aspartate 181 each contribute to the Mg(2+) site. Glutamate 158 is a DNA binding site. Serine 187 carries the post-translational modification Phosphoserine; by CDK2. Arginine 192 carries the post-translational modification Symmetric dimethylarginine; by PRMT5. Residue serine 197 is modified to Phosphoserine. Residues glycine 231 and aspartate 233 each contribute to the DNA site. Aspartate 233 is a Mg(2+) binding site. Phosphoserine is present on residues serine 255, serine 293, and serine 335. The tract at residues 327–380 (RLSKSRQGSTQGRLDDFFKVTGSLSSAKRKEPEPKGSTKKKAKTGAAGKFKRGK) is disordered. Threonine 336 is modified (phosphothreonine). The tract at residues 336-344 (TQGRLDDFF) is interaction with PCNA. Lysine 354 bears the N6-acetyllysine mark. Over residues 363 to 380 (STKKKAKTGAAGKFKRGK) the composition is skewed to basic residues. Threonine 364 bears the Phosphothreonine mark. N6-acetyllysine is present on residues lysine 375, lysine 377, and lysine 380.

The protein belongs to the XPG/RAD2 endonuclease family. FEN1 subfamily. As to quaternary structure, interacts with PCNA. Three molecules of FEN1 bind to one PCNA trimer with each molecule binding to one PCNA monomer. PCNA stimulates the nuclease activity without altering cleavage specificity. The C-terminal domain binds EP300; can bind simultaneously to both PCNA and EP300. Interacts with DDX11; this interaction is direct and increases flap endonuclease activity of FEN1. Interacts with WDR4; regulating its endonuclease activity. Interacts with POLB. The cofactor is Mg(2+). Acetylated by EP300. Acetylation inhibits both endonuclease and exonuclease activity. Acetylation also reduces DNA-binding activity but does not affect interaction with PCNA or EP300. In terms of processing, phosphorylation upon DNA damage induces relocalization to the nuclear plasma. Phosphorylation at Ser-187 by CDK2 occurs during late S-phase and results in dissociation from PCNA. Post-translationally, methylation at Arg-192 by PRMT5 impedes Ser-187 phosphorylation and increases interaction with PCNA.

The protein resides in the nucleus. It localises to the nucleolus. Its subcellular location is the nucleoplasm. It is found in the mitochondrion. Functionally, structure-specific nuclease with 5'-flap endonuclease and 5'-3' exonuclease activities involved in DNA replication and repair. During DNA replication, cleaves the 5'-overhanging flap structure that is generated by displacement synthesis when DNA polymerase encounters the 5'-end of a downstream Okazaki fragment. It enters the flap from the 5'-end and then tracks to cleave the flap base, leaving a nick for ligation. Also involved in the long patch base excision repair (LP-BER) pathway, by cleaving within the apurinic/apyrimidinic (AP) site-terminated flap. Acts as a genome stabilization factor that prevents flaps from equilibrating into structures that lead to duplications and deletions. Also possesses 5'-3' exonuclease activity on nicked or gapped double-stranded DNA, and exhibits RNase H activity. Also involved in replication and repair of rDNA and in repairing mitochondrial DNA. This is Flap endonuclease 1 from Homo sapiens (Human).